The sequence spans 431 residues: Glutamate-1-semialdehyde 2,1-aminomutase (431 aa).

N6-(pyridoxal phosphate)lysine is present on Lys-264.

It belongs to the class-III pyridoxal-phosphate-dependent aminotransferase family. HemL subfamily. As to quaternary structure, homodimer. Pyridoxal 5'-phosphate is required as a cofactor.

It is found in the cytoplasm. It catalyses the reaction (S)-4-amino-5-oxopentanoate = 5-aminolevulinate. The protein operates within porphyrin-containing compound metabolism; protoporphyrin-IX biosynthesis; 5-aminolevulinate from L-glutamyl-tRNA(Glu): step 2/2. In Clostridium beijerinckii (strain ATCC 51743 / NCIMB 8052) (Clostridium acetobutylicum), this protein is Glutamate-1-semialdehyde 2,1-aminomutase.